The following is a 377-amino-acid chain: Geranylgeranyl transferase type-1 subunit beta (377 aa).

PFTB repeat units follow at residues 144-186 (KEAC…YMLN), 193-234 (MKKA…CLMG), 245-284 (LNRI…KLLK), and 291-333 (FEKN…SLME). Residues 219–221 (HGG) and 263–266 (RPNK) contribute to the geranylgeranyl diphosphate site. Zn(2+)-binding residues include Asp-269 and Cys-271. 272–275 (YSFW) is a geranylgeranyl diphosphate binding site. Residue His-321 participates in Zn(2+) binding.

Belongs to the protein prenyltransferase subunit beta family. Heterodimer of FNTA and PGGT1B. PGGT1B mediates interaction with substrate peptides. Zn(2+) serves as cofactor. Requires Mg(2+) as cofactor.

The enzyme catalyses geranylgeranyl diphosphate + L-cysteinyl-[protein] = S-geranylgeranyl-L-cysteinyl-[protein] + diphosphate. Its function is as follows. Catalyzes the transfer of a geranylgeranyl moiety from geranylgeranyl diphosphate to a cysteine at the fourth position from the C-terminus of proteins with the C-terminal sequence Cys-aliphatic-aliphatic-X. Known substrates include RAC1, RAC2, RAP1A and RAP1B. In Rattus norvegicus (Rat), this protein is Geranylgeranyl transferase type-1 subunit beta (Pggt1b).